The sequence spans 1201 residues: ATP-dependent helicase/deoxyribonuclease subunit B (1201 aa).

Belongs to the helicase family. AddB/RexB type 2 subfamily. Heterodimer of AddA and RexB. Mg(2+) is required as a cofactor.

The heterodimer acts as both an ATP-dependent DNA helicase and an ATP-dependent, dual-direction single-stranded exonuclease. Recognizes the chi site generating a DNA molecule suitable for the initiation of homologous recombination. This subunit has 5' -&gt; 3' nuclease activity but not helicase activity. This Levilactobacillus brevis (strain ATCC 367 / BCRC 12310 / CIP 105137 / JCM 1170 / LMG 11437 / NCIMB 947 / NCTC 947) (Lactobacillus brevis) protein is ATP-dependent helicase/deoxyribonuclease subunit B.